Reading from the N-terminus, the 654-residue chain is tRNA 5-methylaminomethyl-2-thiouridine biosynthesis bifunctional protein MnmC (654 aa).

The segment at 1–236 (MSTLLQHAQI…KWEVMHGVYT (236 aa)) is tRNA (mnm(5)s(2)U34)-methyltransferase. The segment at 262–654 (IGAGLAGSAT…FALRRLIRGK (393 aa)) is FAD-dependent cmnm(5)s(2)U34 oxidoreductase.

The protein in the N-terminal section; belongs to the methyltransferase superfamily. tRNA (mnm(5)s(2)U34)-methyltransferase family. It in the C-terminal section; belongs to the DAO family. It depends on FAD as a cofactor.

Its subcellular location is the cytoplasm. It catalyses the reaction 5-aminomethyl-2-thiouridine(34) in tRNA + S-adenosyl-L-methionine = 5-methylaminomethyl-2-thiouridine(34) in tRNA + S-adenosyl-L-homocysteine + H(+). Catalyzes the last two steps in the biosynthesis of 5-methylaminomethyl-2-thiouridine (mnm(5)s(2)U) at the wobble position (U34) in tRNA. Catalyzes the FAD-dependent demodification of cmnm(5)s(2)U34 to nm(5)s(2)U34, followed by the transfer of a methyl group from S-adenosyl-L-methionine to nm(5)s(2)U34, to form mnm(5)s(2)U34. This Pseudomonas entomophila (strain L48) protein is tRNA 5-methylaminomethyl-2-thiouridine biosynthesis bifunctional protein MnmC.